The following is a 365-amino-acid chain: MEEKGCKREEVISLLSAYRAEDLHHDHILSSMCTIPHEMAVFVHGMFSATNLGDPGLFPGTTKIEDRLVHSLGELMHHPGAGGYATSGGTESNLQAIRIAKKLKPEIKNPNIVVPASAHFSFDKTCDILGLEMRTVPYGKNYTVDCDKMAEMVDKNTISVSAIAGTTEYGMIDDVERIAKIALENDLFFHVDAAFGGMVIPFLPNPAPFDFEVPGVSSISLDPHKMGMSTIPCGCLLLREPEQFGTLNVDTPYLTVKKECTLAGTRPGADVAGAYAVIKLLGREGFRAVVAGCMENTRRLIEGMEAFGYTRAVDPVMNVATFEAGPVPKGWIVSHTRAGHLRFVVMPHVTRDVIENFLADVAKIN.

Position 225 is an N6-(pyridoxal phosphate)lysine (lysine 225).

The protein belongs to the group II decarboxylase family. MfnA subfamily. Requires pyridoxal 5'-phosphate as cofactor.

The enzyme catalyses L-tyrosine + H(+) = tyramine + CO2. It catalyses the reaction L-aspartate + H(+) = beta-alanine + CO2. The protein operates within cofactor biosynthesis; methanofuran biosynthesis. It functions in the pathway cofactor biosynthesis; coenzyme A biosynthesis. Functionally, catalyzes the decarboxylation of L-tyrosine to produce tyramine for methanofuran biosynthesis. Can also catalyze the decarboxylation of L-aspartate to produce beta-alanine for coenzyme A (CoA) biosynthesis. The sequence is that of Probable L-tyrosine/L-aspartate decarboxylase from Methanocorpusculum labreanum (strain ATCC 43576 / DSM 4855 / Z).